The chain runs to 418 residues: Gamma-glutamyl phosphate reductase (418 aa).

This sequence belongs to the gamma-glutamyl phosphate reductase family.

The protein localises to the cytoplasm. The enzyme catalyses L-glutamate 5-semialdehyde + phosphate + NADP(+) = L-glutamyl 5-phosphate + NADPH + H(+). Its pathway is amino-acid biosynthesis; L-proline biosynthesis; L-glutamate 5-semialdehyde from L-glutamate: step 2/2. In terms of biological role, catalyzes the NADPH-dependent reduction of L-glutamate 5-phosphate into L-glutamate 5-semialdehyde and phosphate. The product spontaneously undergoes cyclization to form 1-pyrroline-5-carboxylate. The protein is Gamma-glutamyl phosphate reductase of Citrifermentans bemidjiense (strain ATCC BAA-1014 / DSM 16622 / JCM 12645 / Bem) (Geobacter bemidjiensis).